The following is a 319-amino-acid chain: Large ribosomal subunit protein uL10 (319 aa).

The tract at residues 286 to 319 is disordered; the sequence is AGDSGASAAPKEEEKAAEPEEESDEEMGFSLFDD. Residues 304 to 319 show a composition bias toward acidic residues; sequence PEEESDEEMGFSLFDD.

It belongs to the universal ribosomal protein uL10 family. P0 forms a pentameric complex by interaction with dimers of P1 and P2. In terms of processing, phosphorylated.

Functionally, ribosomal protein P0 is the functional equivalent of E.coli protein L10. The protein is Large ribosomal subunit protein uL10 (RP-P0) of Zea mays (Maize).